Consider the following 834-residue polypeptide: Putative COX1/OXI3 intron 1 protein (834 aa).

The interval Met-162–Gly-188 is disordered. A compositionally biased stretch (polar residues) spans Asn-167 to Gly-181. The 282-residue stretch at Leu-296–Ile-577 folds into the Reverse transcriptase domain.

It localises to the mitochondrion. The polypeptide is Putative COX1/OXI3 intron 1 protein (AI1) (Saccharomyces cerevisiae (strain ATCC 204508 / S288c) (Baker's yeast)).